The primary structure comprises 546 residues: Apolipoprotein N-acyltransferase 1 (546 aa).

Transmembrane regions (helical) follow at residues phenylalanine 14–proline 34, alanine 41–valine 61, phenylalanine 62–phenylalanine 82, valine 85–leucine 105, leucine 122–valine 142, leucine 151–phenylalanine 171, and phenylalanine 194–phenylalanine 214. In terms of domain architecture, CN hydrolase spans alanine 233–isoleucine 502. The Proton acceptor role is filled by glutamate 280. Lysine 361 is a catalytic residue. The Nucleophile role is filled by cysteine 413. A helical transmembrane segment spans residues glycine 514–valine 534.

This sequence belongs to the CN hydrolase family. Apolipoprotein N-acyltransferase subfamily.

The protein resides in the cell inner membrane. It catalyses the reaction N-terminal S-1,2-diacyl-sn-glyceryl-L-cysteinyl-[lipoprotein] + a glycerophospholipid = N-acyl-S-1,2-diacyl-sn-glyceryl-L-cysteinyl-[lipoprotein] + a 2-acyl-sn-glycero-3-phospholipid + H(+). It participates in protein modification; lipoprotein biosynthesis (N-acyl transfer). Its function is as follows. Catalyzes the phospholipid dependent N-acylation of the N-terminal cysteine of apolipoprotein, the last step in lipoprotein maturation. The polypeptide is Apolipoprotein N-acyltransferase 1 (Treponema pallidum (strain Nichols)).